The primary structure comprises 408 residues: RNA-splicing ligase RtcB (408 aa).

Mn(2+)-binding residues include Asp-75, Cys-78, His-168, His-185, and His-281. Position 167–171 (Asn-167–Glu-171) interacts with GMP. GMP-binding positions include His-281–Asn-282, Pro-313–Met-316, Ser-320, His-337–Gly-340, and Lys-407. His-337 acts as the GMP-histidine intermediate in catalysis.

The protein belongs to the RtcB family. In terms of assembly, monomer. Requires Mn(2+) as cofactor.

It catalyses the reaction a 3'-end 3'-phospho-ribonucleotide-RNA + a 5'-end dephospho-ribonucleoside-RNA + GTP = a ribonucleotidyl-ribonucleotide-RNA + GMP + diphosphate. The catalysed reaction is a 3'-end 2',3'-cyclophospho-ribonucleotide-RNA + a 5'-end dephospho-ribonucleoside-RNA + GTP + H2O = a ribonucleotidyl-ribonucleotide-RNA + GMP + diphosphate + H(+). Functionally, GTP-dependent RNA ligase that is involved in RNA repair. Joins RNA with 2',3'-cyclic-phosphate or 3'-phosphate ends to RNA with 5'-hydroxy ends. Also acts as a DNA ligase in case of DNA damage by splicing 'dirty' DNA breaks, characterized by 3'-phosphate (or cyclic-phosphate) and 5'-hydroxy ends that cannot be sealed by classical DNA ligases. Repairs tRNA cleaved by colicins D or E5, does not repair damaged 16S rRNA. Its function is as follows. Able to catalyze tRNA splicing in vivo in yeast, but bacteria are not known to splice tRNA. The sequence is that of RNA-splicing ligase RtcB from Escherichia coli (strain K12).